A 57-amino-acid chain; its full sequence is Large ribosomal subunit protein uL30 (57 aa).

Belongs to the universal ribosomal protein uL30 family. As to quaternary structure, part of the 50S ribosomal subunit.

The polypeptide is Large ribosomal subunit protein uL30 (Clostridium perfringens (strain ATCC 13124 / DSM 756 / JCM 1290 / NCIMB 6125 / NCTC 8237 / Type A)).